The following is a 224-amino-acid chain: Urease accessory protein UreF (224 aa).

This sequence belongs to the UreF family. UreD, UreF and UreG form a complex that acts as a GTP-hydrolysis-dependent molecular chaperone, activating the urease apoprotein by helping to assemble the nickel containing metallocenter of UreC. The UreE protein probably delivers the nickel.

Its subcellular location is the cytoplasm. In terms of biological role, required for maturation of urease via the functional incorporation of the urease nickel metallocenter. This chain is Urease accessory protein UreF, found in Pseudomonas savastanoi pv. phaseolicola (strain 1448A / Race 6) (Pseudomonas syringae pv. phaseolicola (strain 1448A / Race 6)).